The following is a 231-amino-acid chain: Maleylacetoacetate isomerase maiA (231 aa).

Residues 7–93 form the GST N-terminal domain; it reads PKVTLYTYFR…YLEEITPASS (87 aa). The 123-residue stretch at 102-224 folds into the GST C-terminal domain; it reads NPEARAVVRT…HWRTQPDTPE (123 aa).

The protein belongs to the GST superfamily. Zeta family.

It carries out the reaction 4-maleylacetoacetate = 4-fumarylacetoacetate. The protein operates within amino-acid degradation; L-phenylalanine degradation; acetoacetate and fumarate from L-phenylalanine: step 5/6. Its function is as follows. Maleylacetoacetate isomerase; part of the L-tyrosine degradation gene cluster that mediates the biosynthesis of the brownish pigment pyomelanin as an alternative melanin. The 4-hydroxyphenylpyruvate dioxygenase hppD catalyzes the conversion of 4-hydroxyphenylpyruvate to homogentisic acid (HGA). The protein hmgX is crucial for this conversion and thus, probably functions as an accessory factor to mediate specific activity of hppD. The homogentisate 1,2-dioxygenase hmgA is then involved in the cleavage of the aromatic ring of HGA and its conversion to 4-maleylacetoacetate. When hmgA activity is lowered by the cell wall integrity (CWI) signaling pathway, HGA accumulates and leads to the production of pyomelanin through benzoquinone acetic acid after oxidation and polymerization. On the opposite, in non-stress conditions, both hppD and hmgA activities are balanced and HGA is degraded into 4-maleylacetoacetate. 4-maleylacetoacetate is further converted to 4-fumarylacetoacetate by the maleylacetoacetate isomerase maiA, which is degraded into fumarate and acetoacetate by the fumarylacetoacetase fahA. In Aspergillus fumigatus (strain ATCC MYA-4609 / CBS 101355 / FGSC A1100 / Af293) (Neosartorya fumigata), this protein is Maleylacetoacetate isomerase maiA.